An 89-amino-acid chain; its full sequence is Porphobilinogen deaminase (89 aa).

This sequence belongs to the HMBS family. In terms of assembly, monomer. Dipyrromethane is required as a cofactor.

It catalyses the reaction 4 porphobilinogen + H2O = hydroxymethylbilane + 4 NH4(+). The protein operates within porphyrin-containing compound metabolism; protoporphyrin-IX biosynthesis; coproporphyrinogen-III from 5-aminolevulinate: step 2/4. Its function is as follows. Tetrapolymerization of the monopyrrole PBG into the hydroxymethylbilane pre-uroporphyrinogen in several discrete steps. The chain is Porphobilinogen deaminase (hemC) from Dickeya chrysanthemi (Pectobacterium chrysanthemi).